The sequence spans 487 residues: Transcriptional adapter ADA2b (487 aa).

Polar residues predominate over residues 1–13 (MGRSRGNFQNFED). Residues 1 to 25 (MGRSRGNFQNFEDPTQRTRKKKNAA) are disordered. The ZZ-type zinc finger occupies 42–98 (GGKYNCDYCQKDITGKIRIKCAVCPDFDLCIECMSVGAEITPHKCDHPYRVMGNLTF). Residues cysteine 47, cysteine 50, cysteine 62, cysteine 65, cysteine 71, cysteine 74, histidine 84, and histidine 88 each coordinate Zn(2+). Residues 100-152 (LICPDWSADDEMLLLEGLEIYGLGNWAEVAEHVGTKSKEQCLEHYRNIYLNSP) form the SANT domain. Lysine 216 carries the N6-acetyllysine; by GCN5 modification. Over residues 368-383 (RKRKRENEEGMNRGKE) the composition is skewed to basic and acidic residues. The segment at 368–388 (RKRKRENEEGMNRGKESGQFG) is disordered. An SWIRM domain is found at 401–487 (QASSSYVNDL…MLVKKGIAQL (87 aa)).

In terms of assembly, interacts in vitro with the HAT domain of GCN5 and with the DNA-binding domain of the transcriptional activator DREB1B/CBF1. Interacts with BZIP11. In terms of processing, acetylated in vitro by GCN5, but acetylation is not essential for biological activity. Expressed in roots, leaves, stems, flowers and siliques, with the strongest activity in the meristematic zones.

The protein localises to the nucleus. Its function is as follows. Required for the function of some acidic activation domains, which activate transcription from a distant site. The exact mechanism of action is not yet known. ADA2 stimulates the acetyltransferase activity of GCN5 on free histones or nucleosomes, probably by opening up the promoter region. Mediates auxin and cytokinin signals in the control of cell proliferation and might be involved in repression of a freezing tolerance pathway at warm temperature. Involved in the positive regulation of salt-induced gene expression by maintaining locus-specific acetylation of histones H4 and H3. The sequence is that of Transcriptional adapter ADA2b (ADA2B) from Arabidopsis thaliana (Mouse-ear cress).